Reading from the N-terminus, the 168-residue chain is uncharacterized protein (168 aa).

This is an uncharacterized protein from Mycoplasma pneumoniae (strain ATCC 29342 / M129 / Subtype 1) (Mycoplasmoides pneumoniae).